Here is a 352-residue protein sequence, read N- to C-terminus: Pollen-specific protein SF21 (352 aa).

This sequence belongs to the NDRG family. Pollen.

In Helianthus annuus (Common sunflower), this protein is Pollen-specific protein SF21 (SF21).